Reading from the N-terminus, the 634-residue chain is TATA box-binding protein-associated factor RNA polymerase I subunit B (634 aa).

The segment at 19–51 (LVCEYCGHGSEYAEDDADNGFFTCRQCSAIHTS) adopts an RRN7-type zinc-finger fold. Zn(2+) is bound by residues cysteine 21, cysteine 24, cysteine 42, and cysteine 45. Residues 51–80 (STQNTATNPFDFPMTPAHLSAHRRPTQPTP) are B-reader. The disordered stretch occupies residues 56 to 117 (ATNPFDFPMT…EPRDFATGAN (62 aa)). A compositionally biased stretch (pro residues) spans 77–87 (QPTPTPKPFPA). The interval 81 to 83 (TPK) is B-linker. Positions 84 to 281 (PFPAPRGAAT…DKLLGSSLND (198 aa)) are N-terminal cyclin fold. Residues 88–98 (PRGAATGAAAP) show a composition bias toward low complexity. The interval 282–284 (CPL) is C-terminal cyclin fold.

The protein belongs to the RRN7/TAF1B family.

The protein localises to the nucleus. It localises to the nucleolus. Component of RNA polymerase I core factor complex that acts as a GTF2B/TFIIB-like factor and plays a key role in multiple steps during transcription initiation such as pre-initiation complex (PIC) assembly and postpolymerase recruitment events in polymerase I (Pol I) transcription. Binds rDNA promoters and plays a role in Pol I recruitment. The polypeptide is TATA box-binding protein-associated factor RNA polymerase I subunit B (Oryza sativa subsp. indica (Rice)).